The sequence spans 866 residues: Replication factor C small subunit (866 aa).

The 131-residue stretch at 183–313 folds into the DOD-type homing endonuclease domain; sequence WLGYFIGDGH…VTYALAGFGI (131 aa).

The protein belongs to the activator 1 small subunits family. RfcS subfamily. In terms of assembly, heteromultimer composed of small subunits (RfcS) and large subunits (RfcL). Post-translationally, this protein undergoes a protein self splicing that involves a post-translational excision of the intervening region (intein) followed by peptide ligation.

Its function is as follows. Part of the RFC clamp loader complex which loads the PCNA sliding clamp onto DNA. The sequence is that of Replication factor C small subunit (rfcS) from Thermococcus kodakarensis (strain ATCC BAA-918 / JCM 12380 / KOD1) (Pyrococcus kodakaraensis (strain KOD1)).